The following is a 33-amino-acid chain: Mu/delta-theraphotoxin-Pm2a (33 aa).

3 disulfides stabilise this stretch: C2/C16, C9/C21, and C15/C27. F33 carries the post-translational modification Phenylalanine amide.

In terms of tissue distribution, expressed by the venom gland.

Its subcellular location is the secreted. In terms of biological role, gating-modifier toxin with very weak activity on Nav1.7/SCN9A and Nav1.8/SCN10A. Shows 22% peak current inhibition (at 10 uM) on Nav1.8/SCN10A sodium channels. Show peak current inhibition and delays fast inactivation on Nav1.7/SCN9A (EC(50)&gt;10 uM). The protein is Mu/delta-theraphotoxin-Pm2a of Poecilotheria metallica (Metallic blue ornamental tree spider).